The chain runs to 331 residues: Olfactory receptor 6B3 (331 aa).

Over 1-25 (MSGENVTRVGTFILVGFPTAPGLQY) the chain is Extracellular. A glycan (N-linked (GlcNAc...) asparagine) is linked at Asn5. The helical transmembrane segment at 26-46 (LLFLLFLLTYLFVLVENLAII) threads the bilayer. Residues 47 to 54 (LTVWSSTS) lie on the Cytoplasmic side of the membrane. A helical transmembrane segment spans residues 55–75 (LHRPMYYFLSSMSFLEIWYVS). Residues 76-99 (DITPKMLEGFLLQQKRISFVGCMT) lie on the Extracellular side of the membrane. A disulfide bridge connects residues Cys97 and Cys189. The chain crosses the membrane as a helical span at residues 100–120 (QLYFFSSLVCTECVLLASMAY). At 121–139 (DRYVAICHPLRYHVLVTPG) the chain is on the cytoplasmic side. Residues 140-160 (LCLQLVGFSFVSGFTISMIKV) form a helical membrane-spanning segment. The Extracellular portion of the chain corresponds to 161–196 (CFISSVTFCGSNVLNHFFCDISPILKLACTDFSTAE). Residues 197–217 (LVDFILAFIILVFPLLATMLS) traverse the membrane as a helical segment. Over 218-237 (YAHITLAVLRIPSATGCWRA) the chain is Cytoplasmic. Residues 238–258 (FFTCASHLTVVTVFYTALLFM) traverse the membrane as a helical segment. The Extracellular segment spans residues 259–271 (YVRPQAIDSRSSN). A helical membrane pass occupies residues 272 to 292 (KLISVLYTVITPILNPLIYCL). Topologically, residues 293–331 (RNKEFKNALKKAFGLTSCAVEGRLSSLLELHLQIHSQPL) are cytoplasmic.

It belongs to the G-protein coupled receptor 1 family.

Its subcellular location is the cell membrane. Its function is as follows. Odorant receptor. The polypeptide is Olfactory receptor 6B3 (OR6B3) (Homo sapiens (Human)).